A 226-amino-acid polypeptide reads, in one-letter code: uncharacterized protein (226 aa).

The ABC transporter domain occupies 4-226; it reads LQFQQVGYWY…FTVKENVAVV (223 aa). An ATP-binding site is contributed by 38-45; it reads GTSGTGKT.

Belongs to the ABC transporter superfamily.

This is an uncharacterized protein from Bacillus subtilis (strain 168).